Consider the following 417-residue polypeptide: NADH-quinone oxidoreductase subunit D (417 aa).

It belongs to the complex I 49 kDa subunit family. As to quaternary structure, NDH-1 is composed of 14 different subunits. Subunits NuoB, C, D, E, F, and G constitute the peripheral sector of the complex.

The protein resides in the cell membrane. The enzyme catalyses a quinone + NADH + 5 H(+)(in) = a quinol + NAD(+) + 4 H(+)(out). NDH-1 shuttles electrons from NADH, via FMN and iron-sulfur (Fe-S) centers, to quinones in the respiratory chain. The immediate electron acceptor for the enzyme in this species is believed to be ubiquinone. Couples the redox reaction to proton translocation (for every two electrons transferred, four hydrogen ions are translocated across the cytoplasmic membrane), and thus conserves the redox energy in a proton gradient. This Polynucleobacter asymbioticus (strain DSM 18221 / CIP 109841 / QLW-P1DMWA-1) (Polynucleobacter necessarius subsp. asymbioticus) protein is NADH-quinone oxidoreductase subunit D.